The primary structure comprises 1171 residues: ATP-dependent helicase/deoxyribonuclease subunit B (1171 aa).

The region spanning 1–301 (MSLRFVIGRA…AHLEMHYEAR (301 aa)) is the UvrD-like helicase ATP-binding domain. 8-15 (GRAGSGKS) lines the ATP pocket. The 307-residue stretch at 281-587 (MKQPRFHSQA…QFANIPPSLD (307 aa)) folds into the UvrD-like helicase C-terminal domain. Residues cysteine 805, cysteine 1129, cysteine 1132, and cysteine 1138 each contribute to the [4Fe-4S] cluster site.

The protein belongs to the helicase family. AddB/RexB type 1 subfamily. In terms of assembly, heterodimer of AddA and AddB. It depends on Mg(2+) as a cofactor. Requires [4Fe-4S] cluster as cofactor.

Functionally, the heterodimer acts as both an ATP-dependent DNA helicase and an ATP-dependent, dual-direction single-stranded exonuclease. Recognizes the chi site generating a DNA molecule suitable for the initiation of homologous recombination. The AddB subunit has 5' -&gt; 3' nuclease activity but not helicase activity. This Bacillus mycoides (strain KBAB4) (Bacillus weihenstephanensis) protein is ATP-dependent helicase/deoxyribonuclease subunit B.